Reading from the N-terminus, the 453-residue chain is o-phthalyl amidase (453 aa).

As to quaternary structure, monomer. The N-terminus is blocked.

The catalysed reaction is a phtalamide + H2O = phthalate + a primary amine. Inhibited by iodoacetate, p-hydroxymercuric benzoate and copper ions. Functionally, catalyzes the removal of the phthalyl group from phthalyl amides generating phthalate and an amine. The enzyme has a broad substrate specificity and hydrolyzes phthalylated amino acids, peptides, beta-lactams, aromatic and aliphatic amines; substitutions allowed on the phthalyl group include 6-F, 6-NH(2), 3-OH, and a nitrogen in the aromatic ring ortho to the carboxy group attached to the amine. This chain is o-phthalyl amidase, found in Xanthobacter agilis.